The following is a 191-amino-acid chain: Protein GrpE (191 aa).

Over residues 1 to 13 (MSEKKNKKEKLAE) the composition is skewed to basic and acidic residues. The tract at residues 1–40 (MSEKKNKKEKLAEEIEQEELNSLDESVETVEEEATEETLT) is disordered. Over residues 14–40 (EIEQEELNSLDESVETVEEEATEETLT) the composition is skewed to acidic residues.

Belongs to the GrpE family. In terms of assembly, homodimer.

Its subcellular location is the cytoplasm. In terms of biological role, participates actively in the response to hyperosmotic and heat shock by preventing the aggregation of stress-denatured proteins, in association with DnaK and GrpE. It is the nucleotide exchange factor for DnaK and may function as a thermosensor. Unfolded proteins bind initially to DnaJ; upon interaction with the DnaJ-bound protein, DnaK hydrolyzes its bound ATP, resulting in the formation of a stable complex. GrpE releases ADP from DnaK; ATP binding to DnaK triggers the release of the substrate protein, thus completing the reaction cycle. Several rounds of ATP-dependent interactions between DnaJ, DnaK and GrpE are required for fully efficient folding. This Listeria innocua serovar 6a (strain ATCC BAA-680 / CLIP 11262) protein is Protein GrpE.